The chain runs to 206 residues: Imidazoleglycerol-phosphate dehydratase (206 aa).

It belongs to the imidazoleglycerol-phosphate dehydratase family.

It is found in the cytoplasm. It carries out the reaction D-erythro-1-(imidazol-4-yl)glycerol 3-phosphate = 3-(imidazol-4-yl)-2-oxopropyl phosphate + H2O. It functions in the pathway amino-acid biosynthesis; L-histidine biosynthesis; L-histidine from 5-phospho-alpha-D-ribose 1-diphosphate: step 6/9. This Leptospira borgpetersenii serovar Hardjo-bovis (strain JB197) protein is Imidazoleglycerol-phosphate dehydratase.